We begin with the raw amino-acid sequence, 316 residues long: L-lactate dehydrogenase (316 aa).

NAD(+) contacts are provided by residues Val-15, Asp-37, Lys-42, Tyr-68, and Gly-82–Leu-83. Residues Gln-85, Arg-91, and Asn-123–Asp-126 contribute to the substrate site. Residues Ala-121–Asn-123 and Thr-146 contribute to the NAD(+) site. Asp-151–Arg-154 lines the substrate pocket. Beta-D-fructose 1,6-bisphosphate is bound by residues Arg-156 and His-171. His-178 acts as the Proton acceptor in catalysis. Position 222 is a phosphotyrosine (Tyr-222). Thr-231 lines the substrate pocket.

It belongs to the LDH/MDH superfamily. LDH family. As to quaternary structure, homotetramer.

Its subcellular location is the cytoplasm. It carries out the reaction (S)-lactate + NAD(+) = pyruvate + NADH + H(+). It participates in fermentation; pyruvate fermentation to lactate; (S)-lactate from pyruvate: step 1/1. With respect to regulation, allosterically activated by fructose 1,6-bisphosphate (FBP). In terms of biological role, catalyzes the conversion of lactate to pyruvate. In Borrelia hermsii (strain HS1 / DAH), this protein is L-lactate dehydrogenase.